Consider the following 311-residue polypeptide: Small ribosomal subunit biogenesis GTPase RsgA (311 aa).

The CP-type G domain maps to 77-239; the sequence is LSKQSHIIAT…IIDTPGIKGF (163 aa). Residues 126 to 129 and 180 to 188 each bind GTP; these read NKTD and GHSGVGKST. Zn(2+) contacts are provided by cysteine 263, cysteine 268, histidine 270, and cysteine 276.

The protein belongs to the TRAFAC class YlqF/YawG GTPase family. RsgA subfamily. In terms of assembly, monomer. Associates with 30S ribosomal subunit, binds 16S rRNA. Requires Zn(2+) as cofactor.

The protein resides in the cytoplasm. Functionally, one of several proteins that assist in the late maturation steps of the functional core of the 30S ribosomal subunit. Helps release RbfA from mature subunits. May play a role in the assembly of ribosomal proteins into the subunit. Circularly permuted GTPase that catalyzes slow GTP hydrolysis, GTPase activity is stimulated by the 30S ribosomal subunit. This is Small ribosomal subunit biogenesis GTPase RsgA from Azobacteroides pseudotrichonymphae genomovar. CFP2.